The sequence spans 184 residues: GTP cyclohydrolase 1 (184 aa).

C75, H78, and C146 together coordinate Zn(2+).

Belongs to the GTP cyclohydrolase I family. As to quaternary structure, toroid-shaped homodecamer, composed of two pentamers of five dimers.

The enzyme catalyses GTP + H2O = 7,8-dihydroneopterin 3'-triphosphate + formate + H(+). It functions in the pathway cofactor biosynthesis; 7,8-dihydroneopterin triphosphate biosynthesis; 7,8-dihydroneopterin triphosphate from GTP: step 1/1. This Pseudoalteromonas translucida (strain TAC 125) protein is GTP cyclohydrolase 1.